Consider the following 296-residue polypeptide: Probable GTP 3',8-cyclase (296 aa).

The region spanning 5-230 (EYGRVVTNLR…HRRTQYFTPK (226 aa)) is the Radical SAM core domain. Residue Arg14 participates in GTP binding. 2 residues coordinate [4Fe-4S] cluster: Cys21 and Cys25. Tyr27 is a binding site for S-adenosyl-L-methionine. Residue Cys28 participates in [4Fe-4S] cluster binding. A GTP-binding site is contributed by Lys61. Gly65 lines the S-adenosyl-L-methionine pocket. GTP is bound at residue Thr89. Ser113 contacts S-adenosyl-L-methionine. Lys150 is a binding site for GTP. [4Fe-4S] cluster contacts are provided by Cys245 and Cys248. A GTP-binding site is contributed by 250–252 (RMR). Position 262 (Cys262) interacts with [4Fe-4S] cluster.

Belongs to the radical SAM superfamily. MoaA family. [4Fe-4S] cluster is required as a cofactor.

It catalyses the reaction GTP + AH2 + S-adenosyl-L-methionine = (8S)-3',8-cyclo-7,8-dihydroguanosine 5'-triphosphate + 5'-deoxyadenosine + L-methionine + A + H(+). It participates in cofactor biosynthesis; molybdopterin biosynthesis. Its function is as follows. Catalyzes the cyclization of GTP to (8S)-3',8-cyclo-7,8-dihydroguanosine 5'-triphosphate. The chain is Probable GTP 3',8-cyclase from Archaeoglobus fulgidus (strain ATCC 49558 / DSM 4304 / JCM 9628 / NBRC 100126 / VC-16).